Consider the following 313-residue polypeptide: tRNA dimethylallyltransferase (313 aa).

17–24 contributes to the ATP binding site; sequence GPTASGKT. A substrate-binding site is contributed by 19 to 24; sequence TASGKT. Interaction with substrate tRNA stretches follow at residues 42–45, 166–170, 247–252, and 280–287; these read DSAL, QRLSR, RCVGYR, and KRQITWLR.

Belongs to the IPP transferase family. Monomer. Mg(2+) is required as a cofactor.

The catalysed reaction is adenosine(37) in tRNA + dimethylallyl diphosphate = N(6)-dimethylallyladenosine(37) in tRNA + diphosphate. Catalyzes the transfer of a dimethylallyl group onto the adenine at position 37 in tRNAs that read codons beginning with uridine, leading to the formation of N6-(dimethylallyl)adenosine (i(6)A). The chain is tRNA dimethylallyltransferase from Proteus mirabilis (strain HI4320).